We begin with the raw amino-acid sequence, 366 residues long: Cobalt-precorrin-5B C(1)-methyltransferase (366 aa).

Belongs to the CbiD family.

It carries out the reaction Co-precorrin-5B + S-adenosyl-L-methionine = Co-precorrin-6A + S-adenosyl-L-homocysteine. It participates in cofactor biosynthesis; adenosylcobalamin biosynthesis; cob(II)yrinate a,c-diamide from sirohydrochlorin (anaerobic route): step 6/10. In terms of biological role, catalyzes the methylation of C-1 in cobalt-precorrin-5B to form cobalt-precorrin-6A. The protein is Cobalt-precorrin-5B C(1)-methyltransferase of Hahella chejuensis (strain KCTC 2396).